Consider the following 78-residue polypeptide: Acyl carrier protein (78 aa).

Residues 4–78 (AQIKEKVYDI…QQAIDYIVKK (75 aa)) form the Carrier domain. Ser-39 carries the post-translational modification O-(pantetheine 4'-phosphoryl)serine.

It belongs to the acyl carrier protein (ACP) family. Post-translationally, 4'-phosphopantetheine is transferred from CoA to a specific serine of apo-ACP by AcpS. This modification is essential for activity because fatty acids are bound in thioester linkage to the sulfhydryl of the prosthetic group.

The protein localises to the cytoplasm. It participates in lipid metabolism; fatty acid biosynthesis. In terms of biological role, carrier of the growing fatty acid chain in fatty acid biosynthesis. The protein is Acyl carrier protein of Chlorobium phaeobacteroides (strain DSM 266 / SMG 266 / 2430).